A 346-amino-acid polypeptide reads, in one-letter code: Histidinol-phosphate aminotransferase (346 aa).

K206 carries the post-translational modification N6-(pyridoxal phosphate)lysine.

The protein belongs to the class-II pyridoxal-phosphate-dependent aminotransferase family. Histidinol-phosphate aminotransferase subfamily. In terms of assembly, homodimer. Pyridoxal 5'-phosphate serves as cofactor.

It carries out the reaction L-histidinol phosphate + 2-oxoglutarate = 3-(imidazol-4-yl)-2-oxopropyl phosphate + L-glutamate. Its pathway is amino-acid biosynthesis; L-histidine biosynthesis; L-histidine from 5-phospho-alpha-D-ribose 1-diphosphate: step 7/9. In Bacteroides thetaiotaomicron (strain ATCC 29148 / DSM 2079 / JCM 5827 / CCUG 10774 / NCTC 10582 / VPI-5482 / E50), this protein is Histidinol-phosphate aminotransferase.